Reading from the N-terminus, the 207-residue chain is Large ribosomal subunit protein uL3 (207 aa).

The protein belongs to the universal ribosomal protein uL3 family. As to quaternary structure, part of the 50S ribosomal subunit. Forms a cluster with proteins L14 and L19.

Functionally, one of the primary rRNA binding proteins, it binds directly near the 3'-end of the 23S rRNA, where it nucleates assembly of the 50S subunit. This Thermotoga maritima (strain ATCC 43589 / DSM 3109 / JCM 10099 / NBRC 100826 / MSB8) protein is Large ribosomal subunit protein uL3.